A 128-amino-acid polypeptide reads, in one-letter code: CD59 glycoprotein (128 aa).

The first 25 residues, 1 to 25 (MGIQGGSVLFGLLLVLAVFCHSGHS), serve as a signal peptide directing secretion. Positions 26–108 (LQCYNCPNPT…QLENGGTSLS (83 aa)) constitute a UPAR/Ly6 domain. 3 disulfide bridges follow: Cys-28-Cys-51, Cys-31-Cys-38, and Cys-44-Cys-64. N-linked (GlcNAc...) asparagine glycosylation occurs at Asn-43. Lys-66 is a glycosylation site (N-linked (Glc) (glycation) lysine). Intrachain disulfides connect Cys-70–Cys-88 and Cys-89–Cys-94. 2 O-linked (GalNAc...) threonine glycosylation sites follow: Thr-76 and Thr-77. Asn-102 is lipidated: GPI-anchor amidated asparagine. A propeptide spans 103-128 (GGTSLSEKTVLLLVTPFLAAAWSLHP) (removed in mature form).

In terms of assembly, interacts with T-cell surface antigen CD2. Post-translationally, N- and O-glycosylated. The N-glycosylation mainly consists of a family of biantennary complex-type structures with and without lactosamine extensions and outer arm fucose residues. Also significant amounts of triantennary complexes (22%). Variable sialylation also present in the Asn-43 oligosaccharide. The predominant O-glycans are mono-sialylated forms of the disaccharide, Gal-beta-1,3GalNAc, and their sites of attachment are probably on Thr-76 and Thr-77. The GPI-anchor of soluble urinary CD59 has no inositol-associated phospholipid, but is composed of seven different GPI-anchor variants of one or more monosaccharide units. Major variants contain sialic acid, mannose and glucosamine. Sialic acid linked to an N-acetylhexosamine-galactose arm is present in two variants. In terms of processing, glycated. Glycation is found in diabetic subjects, but only at minimal levels in nondiabetic subjects. Glycated CD59 lacks MAC-inhibitory function and confers to vascular complications of diabetes.

The protein resides in the cell membrane. Its subcellular location is the secreted. Potent inhibitor of the complement membrane attack complex (MAC) action, which protects human cells from damage during complement activation. Acts by binding to the beta-haipins of C8 (C8A and C8B) components of the assembling MAC, forming an intermolecular beta-sheet that prevents incorporation of the multiple copies of C9 required for complete formation of the osmolytic pore. In terms of biological role, the soluble form from urine retains its specific complement binding activity, but exhibits greatly reduced ability to inhibit complement membrane attack complex (MAC) assembly on cell membranes. This Homo sapiens (Human) protein is CD59 glycoprotein.